The following is a 430-amino-acid chain: MAEITNIRPSFDVSPVAAGLIGASVLVVCVSVTVFVWTCCHQQAEKKHKTPPYKFIHMLKGISIYPETLSNKKKIIKVRRDKDGSHRESGRGNLLVNAESGLLSHDRDPRGPSPASCIDQLPIKRDYGEELRSPMTSLTPGESKPTSPSSPEEDVMLGSLTFSVDYNFPKKALVVTIQEAHGLPVMDGQTQGSDPYIKMTILPDKRHRVKTRVLRKTLDPVFDETFTFYGIPYSQLQDLVLHFLVLSFDRFSRDDVIGEVMVPLAGVDPSTGKVQLTRDIIKRNIQKCISRGELQVSLSYQPVAQRMTVVVLKARHLPKMDITGLSGNPYVKVNVYYGRKRIAKKKTHVKKCTLNPIFNESFIYDIPTDLLPDISIEFLVIDFDRTTKNEVVGRLILGAHSVTTSGAEHWREVCESPRKPVAKWHSLSEY.

Residues 1 to 15 are Vesicular-facing; sequence MAEITNIRPSFDVSP. The chain crosses the membrane as a helical span at residues 16–36; that stretch reads VAAGLIGASVLVVCVSVTVFV. The Cytoplasmic portion of the chain corresponds to 37–430; the sequence is WTCCHQQAEK…VAKWHSLSEY (394 aa). Positions 132–154 are disordered; that stretch reads RSPMTSLTPGESKPTSPSSPEED. S133 is modified (phosphoserine). Residues 140-150 show a composition bias toward low complexity; it reads PGESKPTSPSS. 2 C2 domains span residues 156–278 and 290–425; these read MLGS…QLTR and SRGE…AKWH. Ca(2+) contacts are provided by D249, S252, and D255.

Belongs to the synaptotagmin family. Homodimer. Can also form heterodimers. Interacts with PRKN. Interacts (via C2 2 domain) with AGO2 and SND1; the interaction with SND1 is direct. Interacts with KIF1A; the interaction increases in presence of calcium. Ca(2+) is required as a cofactor. In terms of processing, ubiquitinated, at least by PRKN, and targeted to the proteasome complex for degradation. Ubiquitination is inhibited by ATP13A2. Highly expressed in brain and at lower levels in other tissues.

The protein localises to the cytoplasmic vesicle membrane. Its subcellular location is the perikaryon. It is found in the golgi apparatus. It localises to the trans-Golgi network membrane. The protein resides in the recycling endosome membrane. The protein localises to the lysosome membrane. Its subcellular location is the cytoplasmic vesicle. It is found in the phagosome. It localises to the cell projection. The protein resides in the axon. The protein localises to the dendrite. Its subcellular location is the postsynaptic density. It is found in the clathrin-coated vesicle membrane. In terms of biological role, synaptotagmin family member involved in vesicular and membrane trafficking which does not bind Ca(2+). Inhibits clathrin-mediated and bulk endocytosis in neurons, functions to ensure precision in vesicle retrieval. Plays an important role in dopamine transmission by regulating endocytosis and the vesicle-recycling process. Essential component of a neuronal vesicular trafficking pathway that differs from the synaptic vesicle trafficking pathway but is crucial for development and synaptic plasticity. In macrophages and microglia, inhibits the conventional cytokine secretion, of at least IL6 and TNF, and phagocytosis. In astrocytes, regulates lysosome exocytosis, mechanism required for the repair of injured astrocyte cell membrane. Required for the ATP13A2-mediated regulation of the autophagy-lysosome pathway. The polypeptide is Synaptotagmin-11 (Rattus norvegicus (Rat)).